Consider the following 236-residue polypeptide: Uridylate kinase (236 aa).

8 to 11 (KLSG) provides a ligand contact to ATP. The segment at 16–21 (GEQGYG) is involved in allosteric activation by GTP. Residues glycine 51 and arginine 55 each contribute to the ATP site. UMP contacts are provided by residues aspartate 70 and 131 to 138 (TGNPYFST). ATP-binding residues include asparagine 159, tyrosine 165, and aspartate 168.

The protein belongs to the UMP kinase family. Homohexamer.

It is found in the cytoplasm. It carries out the reaction UMP + ATP = UDP + ADP. The protein operates within pyrimidine metabolism; CTP biosynthesis via de novo pathway; UDP from UMP (UMPK route): step 1/1. Allosterically activated by GTP. Inhibited by UTP. Catalyzes the reversible phosphorylation of UMP to UDP. This Shouchella clausii (strain KSM-K16) (Alkalihalobacillus clausii) protein is Uridylate kinase.